Here is a 195-residue protein sequence, read N- to C-terminus: Phosphoheptose isomerase (195 aa).

The 160-residue stretch at 36–195 folds into the SIS domain; sequence LAHCLLSDGK…DLVDHQLFGE (160 aa). 51–53 is a substrate binding site; sequence NGG. Zn(2+) contacts are provided by His60 and Glu64. Residues Glu64, 93 to 94, 119 to 121, Ser124, and Gln174 each bind substrate; these read ND and STS. The Zn(2+) site is built by Gln174 and His182.

The protein belongs to the SIS family. GmhA subfamily. As to quaternary structure, homotetramer. Zn(2+) serves as cofactor.

The protein resides in the cytoplasm. The enzyme catalyses 2 D-sedoheptulose 7-phosphate = D-glycero-alpha-D-manno-heptose 7-phosphate + D-glycero-beta-D-manno-heptose 7-phosphate. It functions in the pathway carbohydrate biosynthesis; D-glycero-D-manno-heptose 7-phosphate biosynthesis; D-glycero-alpha-D-manno-heptose 7-phosphate and D-glycero-beta-D-manno-heptose 7-phosphate from sedoheptulose 7-phosphate: step 1/1. Its function is as follows. Catalyzes the isomerization of sedoheptulose 7-phosphate in D-glycero-D-manno-heptose 7-phosphate. The sequence is that of Phosphoheptose isomerase from Methylococcus capsulatus (strain ATCC 33009 / NCIMB 11132 / Bath).